The following is a 1009-amino-acid chain: Protein WBSCR14 homolog (1009 aa).

4 disordered regions span residues 1–20 (MSRG…PHDD), 304–354 (MSLG…LHQM), 488–531 (NNQP…DPMM), and 686–728 (ILES…EQEA). Composition is skewed to polar residues over residues 324-350 (RTPT…SSAS) and 499-508 (RSNLLPTQND). A compositionally biased stretch (low complexity) spans 511–526 (LPQFLQSTQPTPQPQS). Positions 686–695 (ILESPSTSGD) are enriched in polar residues. A bHLH domain is found at 803-856 (RKRILHLHAEQNRRSALKDGFDQLMDIIPDLYSGGVKPTNAVVLAKSADHIRRL). Residues 856 to 877 (LQAEKWDKTQKIDEAKAKIEKL) are leucine-zipper.

As to expression, expressed in intestine, neurons, muscle, hypodermis, excretory cell and other tissues.

It localises to the nucleus. It is found in the cytoplasm. Its subcellular location is the mitochondrion. Its function is as follows. Transcription factor that binds to the E box motif 5'-CACGTG-3', probably in a heterodimeric complex with mxl-2. Involved in modulating longevity in response to TOR signaling, dietary restriction, the decline in protein homeostasis associated with normal aging, germline signaling and the insulin-like signaling pathway. Plays a role in autophagy. Involved in regulating migration of the ray 1 precursor cells in the male tail, acting in concert with Wnt and semaphorin signaling pathways. Regulates transcription of genes encoding extracellular matrix (ECM) components which may contribute to the substratum required for migration of the neighboring ray 1 precursor cells. Involved in repressing infection by the microsporidian pathogen N.parisii, probably acting independently of its canonical partner, mxl-2. The protein is Protein WBSCR14 homolog (mml-1) of Caenorhabditis elegans.